Here is a 352-residue protein sequence, read N- to C-terminus: Homoserine O-acetyltransferase (352 aa).

One can recognise an AB hydrolase-1 domain in the interval 37–330; it reads NAVLVCHALT…APHGHDTFLI (294 aa). Residue Ser133 is the Nucleophile of the active site. Residue Arg206 coordinates substrate. Catalysis depends on residues Asp296 and His325. Position 326 (Asp326) interacts with substrate.

This sequence belongs to the AB hydrolase superfamily. MetX family. As to quaternary structure, homodimer.

Its subcellular location is the cytoplasm. It catalyses the reaction L-homoserine + acetyl-CoA = O-acetyl-L-homoserine + CoA. Its pathway is amino-acid biosynthesis; L-methionine biosynthesis via de novo pathway; O-acetyl-L-homoserine from L-homoserine: step 1/1. Transfers an acetyl group from acetyl-CoA to L-homoserine, forming acetyl-L-homoserine. This is Homoserine O-acetyltransferase from Salinibacter ruber (strain DSM 13855 / M31).